Consider the following 350-residue polypeptide: Histidinol-phosphate aminotransferase 1 (350 aa).

Position 210 is an N6-(pyridoxal phosphate)lysine (Lys210).

It belongs to the class-II pyridoxal-phosphate-dependent aminotransferase family. Histidinol-phosphate aminotransferase subfamily. As to quaternary structure, homodimer. Pyridoxal 5'-phosphate is required as a cofactor.

The enzyme catalyses L-histidinol phosphate + 2-oxoglutarate = 3-(imidazol-4-yl)-2-oxopropyl phosphate + L-glutamate. It participates in amino-acid biosynthesis; L-histidine biosynthesis; L-histidine from 5-phospho-alpha-D-ribose 1-diphosphate: step 7/9. The sequence is that of Histidinol-phosphate aminotransferase 1 from Pseudomonas fluorescens (strain ATCC BAA-477 / NRRL B-23932 / Pf-5).